A 598-amino-acid polypeptide reads, in one-letter code: Elongation factor 4 (598 aa).

In terms of domain architecture, tr-type G spans 4–186 (INIRNFAIIA…AIVSRLPAPS (183 aa)). Residues 16-21 (DHGKST) and 133-136 (NKID) contribute to the GTP site.

Belongs to the TRAFAC class translation factor GTPase superfamily. Classic translation factor GTPase family. LepA subfamily.

It localises to the cell inner membrane. The enzyme catalyses GTP + H2O = GDP + phosphate + H(+). In terms of biological role, required for accurate and efficient protein synthesis under certain stress conditions. May act as a fidelity factor of the translation reaction, by catalyzing a one-codon backward translocation of tRNAs on improperly translocated ribosomes. Back-translocation proceeds from a post-translocation (POST) complex to a pre-translocation (PRE) complex, thus giving elongation factor G a second chance to translocate the tRNAs correctly. Binds to ribosomes in a GTP-dependent manner. In Ehrlichia ruminantium (strain Welgevonden), this protein is Elongation factor 4.